The following is a 101-amino-acid chain: Growth-regulated alpha protein (101 aa).

Positions 1–28 (MAPATRSLLRAPLLLLLLLLATSRLATG) are cleaved as a signal peptide. 2 disulfide bridges follow: Cys37-Cys63 and Cys39-Cys79.

It belongs to the intercrine alpha (chemokine CxC) family.

The protein localises to the secreted. In terms of biological role, has chemotactic activity for neutrophils. The protein is Growth-regulated alpha protein (CXCL1) of Cricetulus griseus (Chinese hamster).